A 451-amino-acid chain; its full sequence is Trigger factor (451 aa).

In terms of domain architecture, PPIase FKBP-type spans 163–248; it reads GDIIDMEYTV…IKALYVNILP (86 aa).

The protein belongs to the FKBP-type PPIase family. Tig subfamily.

Its subcellular location is the cytoplasm. The catalysed reaction is [protein]-peptidylproline (omega=180) = [protein]-peptidylproline (omega=0). Functionally, involved in protein export. Acts as a chaperone by maintaining the newly synthesized protein in an open conformation. Functions as a peptidyl-prolyl cis-trans isomerase. This Leptospira borgpetersenii serovar Hardjo-bovis (strain JB197) protein is Trigger factor.